Consider the following 310-residue polypeptide: UDP-N-acetylenolpyruvoylglucosamine reductase (310 aa).

An FAD-binding PCMH-type domain is found at 30–200 (RVGGPAQWLA…VAAEFQLEPG (171 aa)). R179 is an active-site residue. The active-site Proton donor is the S230. Residue E300 is part of the active site.

This sequence belongs to the MurB family. FAD is required as a cofactor.

It is found in the cytoplasm. It carries out the reaction UDP-N-acetyl-alpha-D-muramate + NADP(+) = UDP-N-acetyl-3-O-(1-carboxyvinyl)-alpha-D-glucosamine + NADPH + H(+). Its pathway is cell wall biogenesis; peptidoglycan biosynthesis. In terms of biological role, cell wall formation. This is UDP-N-acetylenolpyruvoylglucosamine reductase from Synechococcus sp. (strain WH7803).